Reading from the N-terminus, the 203-residue chain is Small ribosomal subunit protein uS4 (203 aa).

In terms of domain architecture, S4 RNA-binding spans 93–156 (RRLDNVVYRL…LKVPAILEAV (64 aa)).

Belongs to the universal ribosomal protein uS4 family. Part of the 30S ribosomal subunit. Contacts protein S5. The interaction surface between S4 and S5 is involved in control of translational fidelity.

Functionally, one of the primary rRNA binding proteins, it binds directly to 16S rRNA where it nucleates assembly of the body of the 30S subunit. With S5 and S12 plays an important role in translational accuracy. The sequence is that of Small ribosomal subunit protein uS4 from Streptococcus gordonii (strain Challis / ATCC 35105 / BCRC 15272 / CH1 / DL1 / V288).